A 265-amino-acid polypeptide reads, in one-letter code: MSKITALFKELKATGKKGLIPFIAAGDPDPKQTVELMHALVRGGSSVIELGVPFSDPMADGPVIQRLSERALTHGVTLHSCLEMVKEFRKKDANTPVVLMGYANPVEQMGAERFATEAKAAGVDGVLVVDCPPEECVDFAARMRVAGIDPIFLLAPTSSQERIKGAAKIASGYIYYVSMRGVTGASHLNTQDVASIIPKIREETDIPIAVGFGISDAASAKAVSTSADAVVIGSQIIRLLEDAPSGQAVQSLETFIREIRDALDS.

Catalysis depends on proton acceptor residues E49 and D60.

It belongs to the TrpA family. Tetramer of two alpha and two beta chains.

The enzyme catalyses (1S,2R)-1-C-(indol-3-yl)glycerol 3-phosphate + L-serine = D-glyceraldehyde 3-phosphate + L-tryptophan + H2O. The protein operates within amino-acid biosynthesis; L-tryptophan biosynthesis; L-tryptophan from chorismate: step 5/5. The alpha subunit is responsible for the aldol cleavage of indoleglycerol phosphate to indole and glyceraldehyde 3-phosphate. The protein is Tryptophan synthase alpha chain of Polynucleobacter necessarius subsp. necessarius (strain STIR1).